Here is a 223-residue protein sequence, read N- to C-terminus: MHLLIAAAGSGRRMGADRNKLLLAVHGRPVLAWTLEAAGAAQSIDWIGVIGQPLDHSAMAALFHHAGQPVTWIEGGSTRQESVERGLQALPGDARHVLIHDGARCLVAPQVFNRCAEALLEGGAVIAATPVSDTIKRVDAQGVITDTPDRSELWAAQTPQGFSVSELREGHAQARARNWVVTDDASLFERLGWPVRVLDAGPGNIKVTTPFDLTVAAAVLAQR.

Belongs to the IspD/TarI cytidylyltransferase family. IspD subfamily.

It carries out the reaction 2-C-methyl-D-erythritol 4-phosphate + CTP + H(+) = 4-CDP-2-C-methyl-D-erythritol + diphosphate. Its pathway is isoprenoid biosynthesis; isopentenyl diphosphate biosynthesis via DXP pathway; isopentenyl diphosphate from 1-deoxy-D-xylulose 5-phosphate: step 2/6. In terms of biological role, catalyzes the formation of 4-diphosphocytidyl-2-C-methyl-D-erythritol from CTP and 2-C-methyl-D-erythritol 4-phosphate (MEP). The polypeptide is 2-C-methyl-D-erythritol 4-phosphate cytidylyltransferase (Synechococcus sp. (strain WH7803)).